The chain runs to 334 residues: N-acetyl-gamma-glutamyl-phosphate reductase (334 aa).

The active site involves C154.

The protein belongs to the NAGSA dehydrogenase family. Type 1 subfamily.

It is found in the cytoplasm. It catalyses the reaction N-acetyl-L-glutamate 5-semialdehyde + phosphate + NADP(+) = N-acetyl-L-glutamyl 5-phosphate + NADPH + H(+). It participates in amino-acid biosynthesis; L-arginine biosynthesis; N(2)-acetyl-L-ornithine from L-glutamate: step 3/4. Catalyzes the NADPH-dependent reduction of N-acetyl-5-glutamyl phosphate to yield N-acetyl-L-glutamate 5-semialdehyde. In Photorhabdus laumondii subsp. laumondii (strain DSM 15139 / CIP 105565 / TT01) (Photorhabdus luminescens subsp. laumondii), this protein is N-acetyl-gamma-glutamyl-phosphate reductase.